The primary structure comprises 172 residues: 6,7-dimethyl-8-ribityllumazine synthase (172 aa).

Residues Phe24, 58-60 (ALE), and 82-84 (AVI) each bind 5-amino-6-(D-ribitylamino)uracil. (2S)-2-hydroxy-3-oxobutyl phosphate is bound at residue 87-88 (ET). The Proton donor role is filled by His90. Asn115 contributes to the 5-amino-6-(D-ribitylamino)uracil binding site. Residue Arg129 participates in (2S)-2-hydroxy-3-oxobutyl phosphate binding. Residues 150–172 (ALDQLGDDDEDEEEDEDDEEERA) are disordered. Positions 154 to 172 (LGDDDEDEEEDEDDEEERA) are enriched in acidic residues.

The protein belongs to the DMRL synthase family.

It catalyses the reaction (2S)-2-hydroxy-3-oxobutyl phosphate + 5-amino-6-(D-ribitylamino)uracil = 6,7-dimethyl-8-(1-D-ribityl)lumazine + phosphate + 2 H2O + H(+). It participates in cofactor biosynthesis; riboflavin biosynthesis; riboflavin from 2-hydroxy-3-oxobutyl phosphate and 5-amino-6-(D-ribitylamino)uracil: step 1/2. In terms of biological role, catalyzes the formation of 6,7-dimethyl-8-ribityllumazine by condensation of 5-amino-6-(D-ribitylamino)uracil with 3,4-dihydroxy-2-butanone 4-phosphate. This is the penultimate step in the biosynthesis of riboflavin. This Burkholderia multivorans (strain ATCC 17616 / 249) protein is 6,7-dimethyl-8-ribityllumazine synthase.